The following is a 61-amino-acid chain: UPF0391 membrane protein Bpro_0066 (61 aa).

The next 2 helical transmembrane spans lie at 5–25 (AIIFAVISLIAGALGFGGVAA) and 33–53 (ILFGLFLILAVIFVVLAALGV).

This sequence belongs to the UPF0391 family.

The protein localises to the cell membrane. This Polaromonas sp. (strain JS666 / ATCC BAA-500) protein is UPF0391 membrane protein Bpro_0066.